Here is a 903-residue protein sequence, read N- to C-terminus: Valine--tRNA ligase (903 aa).

Residues 1–15 (MVCVTDQNNENPSQN) show a composition bias toward polar residues. The disordered stretch occupies residues 1–22 (MVCVTDQNNENPSQNRADKLPK). The 'HIGH' region motif lies at 61 to 71 (PNVTGQLHMGH). The 'KMSKS' region motif lies at 552-556 (KMSKS). ATP is bound at residue K555. A coiled-coil region spans residues 836–902 (TVDVAAERKR…ERITKRLEEL (67 aa)).

The protein belongs to the class-I aminoacyl-tRNA synthetase family. ValS type 1 subfamily. As to quaternary structure, monomer.

The protein resides in the cytoplasm. It carries out the reaction tRNA(Val) + L-valine + ATP = L-valyl-tRNA(Val) + AMP + diphosphate. Its function is as follows. Catalyzes the attachment of valine to tRNA(Val). As ValRS can inadvertently accommodate and process structurally similar amino acids such as threonine, to avoid such errors, it has a 'posttransfer' editing activity that hydrolyzes mischarged Thr-tRNA(Val) in a tRNA-dependent manner. The chain is Valine--tRNA ligase from Corynebacterium efficiens (strain DSM 44549 / YS-314 / AJ 12310 / JCM 11189 / NBRC 100395).